The following is a 1501-amino-acid chain: Neither inactivation nor afterpotential protein C (1501 aa).

In terms of domain architecture, Protein kinase spans 16-282 (FEIYEEIAQG…MVEMVEHPFL (267 aa)). ATP is bound by residues 22-30 (IAQGVNAKV) and Lys45. The Proton acceptor role is filled by Asp145. Ser183 is modified (phosphoserine). The Myosin motor domain occupies 332–1037 (MYPEDLAALE…FLARLYELQV (706 aa)). Residues 913–934 (LTLLKMLSQNANLGVHFVRCIR) form an actin-binding region. IQ domains lie at 1036-1065 (QVKK…FKLG) and 1072-1101 (HDVA…EKSG). The interaction with rtp stretch occupies residues 1043–1271 (VQSMMRALLA…RMGESDNIYN (229 aa)). Residues 1066 to 1501 (KKGPEHHDVA…ITLSGYAVDI (436 aa)) form a non alpha-helical, C-terminal domain region. Disordered stretches follow at residues 1308-1364 (NWGV…DPVR) and 1390-1473 (KTNY…EDSN). Positions 1326 to 1335 (APPPPPPPMP) are enriched in pro residues. Positions 1336-1358 (SSNYYRNNPNQQQRNYQQRSSYP) are enriched in low complexity. A compositionally biased stretch (basic and acidic residues) spans 1405-1414 (NNRRGSDSGD). The span at 1449 to 1463 (FGQQQRAPTLRQSPA) shows a compositional bias: polar residues.

In the C-terminal section; belongs to the TRAFAC class myosin-kinesin ATPase superfamily. Myosin family. The protein in the N-terminal section; belongs to the protein kinase superfamily. Ser/Thr protein kinase family. As to quaternary structure, interacts with rtp. As to expression, expressed in the phototransducing compartment of photoreceptor cells, the rhabdomeres (at protein level).

It is found in the cytoplasm. The protein localises to the cytoskeleton. It localises to the nucleus. The protein resides in the membrane. Its subcellular location is the cell projection. It is found in the rhabdomere membrane. The catalysed reaction is L-seryl-[protein] + ATP = O-phospho-L-seryl-[protein] + ADP + H(+). The enzyme catalyses L-threonyl-[protein] + ATP = O-phospho-L-threonyl-[protein] + ADP + H(+). In terms of biological role, required for photoreceptor cell function. The ninaC proteins combines putative serine/threonine-protein kinase and myosin activities. Essential for the expression and stability of the rtp protein in the photoreceptors. The rtp/ninaC complex is required for stability of inad and inac and the normal termination of phototransduction in the retina. This chain is Neither inactivation nor afterpotential protein C (ninaC), found in Drosophila melanogaster (Fruit fly).